A 374-amino-acid chain; its full sequence is Anhydro-N-acetylmuramic acid kinase (374 aa).

Residue 9–16 (GTSLDGID) coordinates ATP.

Belongs to the anhydro-N-acetylmuramic acid kinase family.

The catalysed reaction is 1,6-anhydro-N-acetyl-beta-muramate + ATP + H2O = N-acetyl-D-muramate 6-phosphate + ADP + H(+). It functions in the pathway amino-sugar metabolism; 1,6-anhydro-N-acetylmuramate degradation. It participates in cell wall biogenesis; peptidoglycan recycling. In terms of biological role, catalyzes the specific phosphorylation of 1,6-anhydro-N-acetylmuramic acid (anhMurNAc) with the simultaneous cleavage of the 1,6-anhydro ring, generating MurNAc-6-P. Is required for the utilization of anhMurNAc either imported from the medium or derived from its own cell wall murein, and thus plays a role in cell wall recycling. This Methylobacterium nodulans (strain LMG 21967 / CNCM I-2342 / ORS 2060) protein is Anhydro-N-acetylmuramic acid kinase.